The following is a 272-amino-acid chain: Phosphatidylglycerol--prolipoprotein diacylglyceryl transferase (272 aa).

4 helical membrane passes run 16–36, 62–82, 97–117, and 129–149; these read VGLH…LSSF, FALG…VLFY, IWKG…WAAV, and LSVT…ALLI. An a 1,2-diacyl-sn-glycero-3-phospho-(1'-sn-glycerol)-binding site is contributed by Arg150. 2 consecutive transmembrane segments (helical) span residues 206 to 226 and 246 to 266; these read GVIR…VAVI and ILTI…GIIW.

This sequence belongs to the Lgt family.

It is found in the cell inner membrane. The catalysed reaction is L-cysteinyl-[prolipoprotein] + a 1,2-diacyl-sn-glycero-3-phospho-(1'-sn-glycerol) = an S-1,2-diacyl-sn-glyceryl-L-cysteinyl-[prolipoprotein] + sn-glycerol 1-phosphate + H(+). The protein operates within protein modification; lipoprotein biosynthesis (diacylglyceryl transfer). Its function is as follows. Catalyzes the transfer of the diacylglyceryl group from phosphatidylglycerol to the sulfhydryl group of the N-terminal cysteine of a prolipoprotein, the first step in the formation of mature lipoproteins. The chain is Phosphatidylglycerol--prolipoprotein diacylglyceryl transferase from Chlamydia trachomatis serovar D (strain ATCC VR-885 / DSM 19411 / UW-3/Cx).